Reading from the N-terminus, the 240-residue chain is DNA repair protein RecO (240 aa).

It belongs to the RecO family.

Its function is as follows. Involved in DNA repair and RecF pathway recombination. This chain is DNA repair protein RecO, found in Xanthomonas euvesicatoria pv. vesicatoria (strain 85-10) (Xanthomonas campestris pv. vesicatoria).